Here is a 637-residue protein sequence, read N- to C-terminus: Limonene/alpha-pinene synthase, chloroplastic (637 aa).

Residues 1–56 constitute a chloroplast transit peptide; it reads MALLSIVSLQVPKSCGLKSLISSSNVQKALCISTAVPTLRMRRRQKALVINMKLTT. Mg(2+) contacts are provided by Asp-388, Asp-392, and Asp-540. The DDXXD motif motif lies at 388–392; the sequence is DDMYD.

This sequence belongs to the terpene synthase family. Tpsd subfamily. Requires Mg(2+) as cofactor. The cofactor is Mn(2+). K(+) is required as a cofactor.

The protein localises to the plastid. The protein resides in the chloroplast. The catalysed reaction is (2E)-geranyl diphosphate = (4S)-limonene + diphosphate. It catalyses the reaction (2E)-geranyl diphosphate = (1S,5S)-alpha-pinene + diphosphate. The protein operates within terpene metabolism; oleoresin biosynthesis. Functionally, involved in defensive oleoresin formation in conifers in response to insect attack or other injury. Involved in monoterpene (C10) olefins biosynthesis. This is Limonene/alpha-pinene synthase, chloroplastic (ag11) from Abies grandis (Grand fir).